A 248-amino-acid polypeptide reads, in one-letter code: 3-deoxy-manno-octulosonate cytidylyltransferase (248 aa).

It belongs to the KdsB family.

It localises to the cytoplasm. The catalysed reaction is 3-deoxy-alpha-D-manno-oct-2-ulosonate + CTP = CMP-3-deoxy-beta-D-manno-octulosonate + diphosphate. Its pathway is nucleotide-sugar biosynthesis; CMP-3-deoxy-D-manno-octulosonate biosynthesis; CMP-3-deoxy-D-manno-octulosonate from 3-deoxy-D-manno-octulosonate and CTP: step 1/1. The protein operates within bacterial outer membrane biogenesis; lipopolysaccharide biosynthesis. Functionally, activates KDO (a required 8-carbon sugar) for incorporation into bacterial lipopolysaccharide in Gram-negative bacteria. The chain is 3-deoxy-manno-octulosonate cytidylyltransferase from Escherichia coli O139:H28 (strain E24377A / ETEC).